Here is a 139-residue protein sequence, read N- to C-terminus: Gene 22 protein (139 aa).

The chain is Gene 22 protein (22) from Mycobacterium phage D29 (Mycobacteriophage D29).